The primary structure comprises 105 residues: Ferredoxin--nitrite reductase, chloroplastic (105 aa).

Residues C28 and C32 each contribute to the [4Fe-4S] cluster site. Position 32 (C32) interacts with siroheme.

The protein belongs to the nitrite and sulfite reductase 4Fe-4S domain family. Monomer. The cofactor is siroheme. [4Fe-4S] cluster serves as cofactor. As to expression, highest expression in roots and hypocotyls. Some expression in cotyledonary whorls.

Its subcellular location is the plastid. The protein localises to the chloroplast. It carries out the reaction 6 oxidized [2Fe-2S]-[ferredoxin] + NH4(+) + 2 H2O = nitrite + 6 reduced [2Fe-2S]-[ferredoxin] + 8 H(+). The protein operates within nitrogen metabolism; nitrate reduction (assimilation). This Pinus sylvestris (Scotch pine) protein is Ferredoxin--nitrite reductase, chloroplastic (NIR).